Consider the following 937-residue polypeptide: Chromatin assembly factor 1 subunit A (937 aa).

The interval 21-69 is disordered; the sequence is RLPFKRLNPVPKEKHDAEAEGKKGKCSKSGLGQSKDSSTDTLHASTDNM. Over residues 31–43 the composition is skewed to basic and acidic residues; sequence PKEKHDAEAEGKK. The segment covering 59 to 69 has biased composition (polar residues); it reads TDTLHASTDNM. Residues 213–226 carry the PxVxL motif motif; it reads FEGKMPVVLLEDIM. 5 disordered regions span residues 250–386, 574–614, 753–778, 831–851, and 910–937; these read SHEG…EKRK, VDSD…IPHG, GDTS…VPSK, SGKE…TPVS, and TVTE…SNTV. Residues 255–269 are compositionally biased toward low complexity; sequence SVLTNSSLSSLSVSS. A compositionally biased stretch (basic and acidic residues) spans 301–386; the sequence is SSAEKEKLRL…KLRVKEEKRK (86 aa). 2 stretches are compositionally biased toward acidic residues: residues 574–586 and 594–608; these read VDSD…EEPG and GDDE…DDDG. Polar residues predominate over residues 756-766; it reads SPVSPNTSRPQ.

This sequence belongs to the CHAF1A family. Subunit of the CAF-1 complex that contains RBBP4, CHAF1B and CHAF1A. Interacts with CHAF1B, PCNA and RBBP4.

Its subcellular location is the nucleus. In terms of biological role, acts as a component of the histone chaperone complex chromatin assembly factor 1 (CAF-1), which assembles histone octamers onto DNA during replication and repair. CAF-1 performs the first step of the nucleosome assembly process, bringing newly synthesized histones H3 and H4 to replicating DNA; histones H2A/H2B can bind to this chromatin precursor subsequent to DNA replication to complete the histone octamer. The chain is Chromatin assembly factor 1 subunit A (CHAF1A) from Gallus gallus (Chicken).